The primary structure comprises 501 residues: MIMTKQKNSLAERLNIGEEVRELKLGATFNPKNTSTAFHTIKYDFKPASVDTSRMASVDVGSNNQVTVTVPNSESSGVPHTVYKGNQREYAKECLMIYDKETGAITIEKLNHNIQVKKTRSEVTSKSVQLPGQHASVNMGQGQLHSQGANGAGTGQGPISAPGHGSGTAPKMENSTMRISTKTKVSTGSRRNNIIDFKPRNSPMQQSSPSRPVPVHRSPQSAPAWDANNAQQTLPSIPLITDDDDFGLRAALHNSGHANTSGSSTGSATGQTDFGSISSSSHIGKQRQAPPHGHGKRQQMHQRQSPPMAQQQQPSNYGRGYNGGQSHAQQQRQRNSPQQQRPPAYGHGNSMTMDLDSTREQELTSQSVAQAAAALEQQIGGALSASSSSSESDSSDSDSGSDSDDSTEDDRPMEGQQPVYQNQNHQQQQMAQQHLNQLPNLGLGSISPAYGSNHQQQQQQMVPHQQQQKQQSGIYASNGGFPNDLLQNDLQLSSNSSDDDD.

2 stretches are compositionally biased toward polar residues: residues 138–149 (NMGQGQLHSQGA) and 173–192 (ENST…SRRN). 2 disordered regions span residues 138–226 (NMGQ…PAWD) and 256–501 (GHAN…DDDD). Composition is skewed to low complexity over residues 200-221 (RNSP…SPQS) and 256-270 (GHAN…SATG). Ser202 is subject to Phosphoserine. Polar residues predominate over residues 271–283 (QTDFGSISSSSHI). 2 stretches are compositionally biased toward low complexity: residues 302 to 314 (QRQS…QQQP) and 329 to 343 (QQQR…QRPP). Positions 393-408 (DSSDSDSGSDSDDSTE) are enriched in acidic residues. Composition is skewed to low complexity over residues 416–437 (QQPV…HLNQ), 455–471 (QQQQ…QKQQ), and 483–501 (NDLL…DDDD).

The protein belongs to the EAF family.

It localises to the nucleus. Promotes transcriptional elongation by Su(Tpl)/ELL. Essential for development. In Drosophila yakuba (Fruit fly), this protein is Ell-associated factor Eaf.